A 251-amino-acid polypeptide reads, in one-letter code: CDP-diacylglycerol pyrophosphatase (251 aa).

A helical membrane pass occupies residues 4-24 (AGLLFLVMIVIAVVAAGIGYW).

It belongs to the Cdh family.

It is found in the cell inner membrane. It catalyses the reaction a CDP-1,2-diacyl-sn-glycerol + H2O = a 1,2-diacyl-sn-glycero-3-phosphate + CMP + 2 H(+). It participates in phospholipid metabolism; CDP-diacylglycerol degradation; phosphatidate from CDP-diacylglycerol: step 1/1. The protein is CDP-diacylglycerol pyrophosphatase of Escherichia coli (strain SE11).